The chain runs to 241 residues: MVKDTLFSTPIAKLGDFIFDENVAEVFPDMIQRSVPGYSNIITAIGMLAERFVTADSNVYDLGCSRGAATLSARRNIHQPNVKIIGIDNSQPMVERCCQHIAAYHSEIPVEILCNDIRHVEIKNASMVILNFTLQFLPPEDRVALLIKIYEGLNPNGVLVLSEKFRFEDTKVNHLLIDLHHQFKRANGYSELEVSQKRTALENVMRTDSIETHKVRLKNIGFSQVELWFQCFNFGSMIAVK.

Residues Tyr-38, 63 to 65 (GCS), 88 to 89 (DN), 116 to 117 (DI), Asn-131, and Arg-198 each bind S-adenosyl-L-methionine.

This sequence belongs to the class I-like SAM-binding methyltransferase superfamily. Cx-SAM synthase family. In terms of assembly, homodimer.

It carries out the reaction prephenate + S-adenosyl-L-methionine = carboxy-S-adenosyl-L-methionine + 3-phenylpyruvate + H2O. Its function is as follows. Catalyzes the conversion of S-adenosyl-L-methionine (SAM) to carboxy-S-adenosyl-L-methionine (Cx-SAM). This chain is Carboxy-S-adenosyl-L-methionine synthase, found in Haemophilus influenzae (strain PittEE).